The following is a 174-amino-acid chain: uncharacterized protein (174 aa).

A helical membrane pass occupies residues 7–27 (LIILAIFTLWVGGFGYYLYLI).

It localises to the membrane. This is an uncharacterized protein from Rickettsia prowazekii (strain Madrid E).